A 431-amino-acid chain; its full sequence is tRNA(Ile)-lysidine synthase (431 aa).

An ATP-binding site is contributed by 19-24; that stretch reads STGIDS.

It belongs to the tRNA(Ile)-lysidine synthase family.

Its subcellular location is the cytoplasm. It carries out the reaction cytidine(34) in tRNA(Ile2) + L-lysine + ATP = lysidine(34) in tRNA(Ile2) + AMP + diphosphate + H(+). Its function is as follows. Ligates lysine onto the cytidine present at position 34 of the AUA codon-specific tRNA(Ile) that contains the anticodon CAU, in an ATP-dependent manner. Cytidine is converted to lysidine, thus changing the amino acid specificity of the tRNA from methionine to isoleucine. The sequence is that of tRNA(Ile)-lysidine synthase from Staphylococcus aureus (strain MRSA252).